An 839-amino-acid polypeptide reads, in one-letter code: ATP-binding cassette sub-family F member 1 (839 aa).

The interval 1 to 258 is disordered; the sequence is MPKGPKQQPP…KKEKKKLKKQ (258 aa). Ser22 carries the phosphoserine modification. Residues 29-39 are compositionally biased toward basic residues; it reads KKGKKDKKTKK. Over residues 47–64 the composition is skewed to basic and acidic residues; sequence VEDKQAGEEEKLQKEKEQ. The segment covering 71–83 has biased composition (basic residues); that stretch reads QKKKRDTRKGRRK. 3 positions are modified to phosphoserine: Ser105, Ser109, and Ser140. Residues 136–149 are compositionally biased toward acidic residues; that stretch reads IQDESEEEKEEEEE. Residues 150-162 show a composition bias toward basic and acidic residues; the sequence is KPVLKPAKPEKNR. Position 195 is a phosphothreonine (Thr195). Ser197 carries the phosphoserine modification. Positions 206 to 223 are enriched in basic and acidic residues; the sequence is TKEKEPPRPGKDKDKKGA. Residue Ser227 is modified to Phosphoserine. The segment covering 247–256 has biased composition (basic residues); that stretch reads LSKKEKKKLK. Residues 298-542 enclose the ABC transporter 1 domain; it reads IKLEKFSISA…MYQQKQKELL (245 aa). Residue 330 to 337 participates in ATP binding; it reads GPNGKGKT. Residues 553–574 show a composition bias toward basic and acidic residues; the sequence is KELKAGGKSTKQAEKQTKEVLT. A disordered region spans residues 553–600; sequence KELKAGGKSTKQAEKQTKEVLTRKQQKCRRKNQDEESQDPPELLKRPR. Ser589 is subject to Phosphoserine. An ABC transporter 2 domain is found at 619–834; that stretch reads LGLHGVTFGY…VLEALGEVMV (216 aa). 652-659 is a binding site for ATP; that stretch reads GPNGVGKS.

As to quaternary structure, interacts (via N-terminus) with EIF2S1; the interaction is independent of its phosphorylated status. Associates (via both ABC transporter domains) with the ribosomes. Phosphorylated at phosphoserine and phosphothreonine. Phosphorylation on Ser-109 and Ser-140 by CK2; inhibits association of EIF2 with ribosomes.

Its subcellular location is the cytoplasm. It localises to the nucleus. The protein localises to the nucleoplasm. The protein resides in the nucleus envelope. Functionally, required for efficient Cap- and IRES-mediated mRNA translation initiation. Not involved in the ribosome biogenesis. In Rattus norvegicus (Rat), this protein is ATP-binding cassette sub-family F member 1 (Abcf1).